A 416-amino-acid chain; its full sequence is Chromate transport protein (416 aa).

Residues 1-21 form a disordered region; the sequence is MSVANEESYRPSKATDATTEA. 11 helical membrane-spanning segments follow: residues 99–119, 128–148, 160–177, 181–198, 204–224, 237–257, 283–303, 308–328, 341–361, 371–391, and 395–415; these read LGGVLAGLGFMLPGFLLMFAL, FVGTALGAAFLGVQAAVIALI, LLDRWLWVIAIVCALAAI, DFWITLPAGGLVYALLVL, ALLVTLAAVALAAAVALWAAP, ASVLLIFASGLKAGLLTFGGA, LALSGVLPAPLIIFATFVGYV, IGAVAMTVGVFLPAFAFSLIF, LHAFLDGVAAGVVGLIGATTI, VPSLTVGMSIFAAGLAFLYAW, and LNVVVVILAAGLAGWLVFPNQ.

Belongs to the chromate ion transporter (CHR) (TC 2.A.51) family.

It is found in the cell inner membrane. In terms of biological role, this protein reduces chromate accumulation and is essential for chromate resistance. The polypeptide is Chromate transport protein (Pseudomonas aeruginosa).